The primary structure comprises 151 residues: Chaperonin GroEL (151 aa).

41-45 (DGTTT) provides a ligand contact to ATP.

This sequence belongs to the chaperonin (HSP60) family. In terms of assembly, forms a cylinder of 14 subunits composed of two heptameric rings stacked back-to-back. Interacts with the co-chaperonin GroES.

It is found in the cytoplasm. It carries out the reaction ATP + H2O + a folded polypeptide = ADP + phosphate + an unfolded polypeptide.. In terms of biological role, together with its co-chaperonin GroES, plays an essential role in assisting protein folding. The GroEL-GroES system forms a nano-cage that allows encapsulation of the non-native substrate proteins and provides a physical environment optimized to promote and accelerate protein folding. The polypeptide is Chaperonin GroEL (Mycolicibacterium fortuitum (Mycobacterium fortuitum)).